The chain runs to 164 residues: MKWKVSVLACILHVRFPGAEAQSFGLLDPKLCYLLDGILFIYGVIITALYLRAKFSRSAETAANLQDPNQLYNELNLGRREEYDVLEKKRARDPEMGGKQQRRRNPQEGVYNALQKDKMAEAYSEIGTKGERRRGKGHDGLYQGLSTATKDTYDALHMQTLAPR.

The N-terminal stretch at 1-21 (MKWKVSVLACILHVRFPGAEA) is a signal peptide. Q22 carries the blocked amino end (Gln) modification. Residues 22–30 (QSFGLLDPK) are Extracellular-facing. The helical transmembrane segment at 31-51 (LCYLLDGILFIYGVIITALYL) threads the bilayer. The Cytoplasmic segment spans residues 52-164 (RAKFSRSAET…ALHMQTLAPR (113 aa)). Residue S58 is modified to Phosphoserine. ITAM domains follow at residues 61–89 (TAAN…LEKK), 100–128 (QQRR…EIGT), and 131–159 (ERRR…LHMQ). Y72 and Y83 each carry phosphotyrosine. Residues 87-96 (EKKRARDPEM) are compositionally biased toward basic and acidic residues. The disordered stretch occupies residues 87–111 (EKKRARDPEMGGKQQRRRNPQEGVY). A phosphotyrosine mark is found at Y111, Y123, Y142, and Y153. Residues 124–143 (SEIGTKGERRRGKGHDGLYQ) form a disordered region.

The protein belongs to the CD3Z/FCER1G family. In terms of assembly, the TCR-CD3 complex is composed of a CD3D/CD3E and a CD3G/CD3E heterodimers that preferentially associate with TCRalpha and TCRbeta, respectively, to form TCRalpha/CD3E/CD3G and TCRbeta/CD3G/CD3E trimers. In turn, the hexamer interacts with CD3Z homodimer to form the TCR-CD3 complex. Alternatively, TCRalpha and TCRbeta can be replaced by TCRgamma and TCRdelta. Interacts with SLA. Interacts with SLA2. Interacts with TRAT1. Interacts with DOCK2. Interacts with SHB. Interacts with ZAP70. Interacts (tyrosine phosphorylated) with SHC1 (via SH2 domain). Interacts with PTPRC. Interacts with CRK; this interaction regulates CD3Z phosphorylation. Interacts (on T cell side) with CD81, ICAM1 and CD9 at immunological synapses between antigen-presenting cells and T cells. Interacts with CD160. Interacts with LY6E. Interacts with LY6E. The signaling subunit of immunoglobulin gamma (IgG) Fc receptor complex. As a homodimer or a heterodimer with FCER1G, associates with the ligand binding subunit FCGR3A (via transmembrane domain); this interaction is a prerequisite for Fc receptor complex expression on the cell surface. Interacts with CD5. In terms of processing, phosphorylated on Tyr residues after T-cell receptor triggering by LCK in association with CD4/CD8. As to expression, CD3Z is expressed in normal lymphoid tissue and in peripheral blood mononuclear cells (PBMCs). Expressed also in retinal ganglion cells.

It localises to the cell membrane. Part of the TCR-CD3 complex present on T-lymphocyte cell surface that plays an essential role in adaptive immune response. When antigen presenting cells (APCs) activate T-cell receptor (TCR), TCR-mediated signals are transmitted across the cell membrane by the CD3 chains CD3D, CD3E, CD3G and CD3Z. All CD3 chains contain immunoreceptor tyrosine-based activation motifs (ITAMs) in their cytoplasmic domain. Upon TCR engagement, these motifs become phosphorylated by Src family protein tyrosine kinases LCK and FYN, resulting in the activation of downstream signaling pathways. CD3Z ITAMs phosphorylation creates multiple docking sites for the protein kinase ZAP70 leading to ZAP70 phosphorylation and its conversion into a catalytically active enzyme. Plays an important role in intrathymic T-cell differentiation. Additionally, participates in the activity-dependent synapse formation of retinal ganglion cells (RGCs) in both the retina and dorsal lateral geniculate nucleus (dLGN). In Mus musculus (Mouse), this protein is T-cell surface glycoprotein CD3 zeta chain (Cd247).